The following is a 710-amino-acid chain: Cleavage and polyadenylation factor complex subunit C74.02c (710 aa).

Over residues 1–30 (MDNWNSVRNVSSDRQTSKTSENPPHTSNEY) the composition is skewed to polar residues. Disordered regions lie at residues 1–42 (MDNW…LSPD), 85–170 (ASSN…SDVN), and 361–510 (GPAM…SVSW). The segment covering 86 to 108 (SSNPSLISSGSSQTGSPSQSLSS) has biased composition (low complexity). Over residues 109–170 (NKEPSSPGIS…EVPSSKSDVN (62 aa)) the composition is skewed to polar residues. 2 stretches are compositionally biased toward low complexity: residues 361–383 (GPAM…SSNS) and 401–420 (LASS…PLTK). The span at 421–430 (QQTNPSTPLS) shows a compositional bias: polar residues. A compositionally biased stretch (basic and acidic residues) spans 437–447 (KGREKEKDKDS).

As to quaternary structure, component of the cleavage and polyadenylation factor (CPF) complex.

It localises to the cytoplasm. The protein localises to the nucleus. In terms of biological role, RNA-binding component of the cleavage and polyadenylation factor (CPF) complex, which plays a key role in polyadenylation-dependent pre-mRNA 3'-end formation. Involved in poly(A) site recognition. May be involved in coupling transcription termination and mRNA 3'-end formation. This chain is Cleavage and polyadenylation factor complex subunit C74.02c, found in Schizosaccharomyces pombe (strain 972 / ATCC 24843) (Fission yeast).